The following is a 183-amino-acid chain: Holliday junction branch migration complex subunit RuvA (183 aa).

The segment at 1–64 (MVVGIEGIIT…EDSNKFYGFL (64 aa)) is domain I. Positions 65 to 139 (DKDEQKMFEM…DTRTKLENVS (75 aa)) are domain II. A region of interest (flexible linker) is located at residue Ser139. Residues 139–183 (SDDKSEALAALLTLGFKQEKIISVLASAQATGTSELIKEALKKLR) are domain III.

It belongs to the RuvA family. As to quaternary structure, homotetramer. Forms an RuvA(8)-RuvB(12)-Holliday junction (HJ) complex. HJ DNA is sandwiched between 2 RuvA tetramers; dsDNA enters through RuvA and exits via RuvB. An RuvB hexamer assembles on each DNA strand where it exits the tetramer. Each RuvB hexamer is contacted by two RuvA subunits (via domain III) on 2 adjacent RuvB subunits; this complex drives branch migration. In the full resolvosome a probable DNA-RuvA(4)-RuvB(12)-RuvC(2) complex forms which resolves the HJ.

The protein resides in the cytoplasm. In terms of biological role, the RuvA-RuvB-RuvC complex processes Holliday junction (HJ) DNA during genetic recombination and DNA repair, while the RuvA-RuvB complex plays an important role in the rescue of blocked DNA replication forks via replication fork reversal (RFR). RuvA specifically binds to HJ cruciform DNA, conferring on it an open structure. The RuvB hexamer acts as an ATP-dependent pump, pulling dsDNA into and through the RuvAB complex. HJ branch migration allows RuvC to scan DNA until it finds its consensus sequence, where it cleaves and resolves the cruciform DNA. This Campylobacter jejuni subsp. doylei (strain ATCC BAA-1458 / RM4099 / 269.97) protein is Holliday junction branch migration complex subunit RuvA.